Reading from the N-terminus, the 171-residue chain is MARNDKNDKNEQTDGLVERLVTVDRVAKVVKGGRIFSFTALTVVGDGNGRVGFGRGKAREVPAAIQKALEAAKRNMITVELNDATLYHPIKARHGASKVYMQPASEGTGVIAGGAMRAVLEVAGVKDVLTKCYGSTNTANVVRATFNGLRDMSTPEKMAAKRGKSVDEILG.

Positions 16–79 (LVERLVTVDR…EAAKRNMITV (64 aa)) constitute an S5 DRBM domain.

This sequence belongs to the universal ribosomal protein uS5 family. Part of the 30S ribosomal subunit. Contacts proteins S4 and S8.

With S4 and S12 plays an important role in translational accuracy. In terms of biological role, located at the back of the 30S subunit body where it stabilizes the conformation of the head with respect to the body. This chain is Small ribosomal subunit protein uS5, found in Psychrobacter arcticus (strain DSM 17307 / VKM B-2377 / 273-4).